The primary structure comprises 183 residues: Endoribonuclease YbeY (183 aa).

His-143, His-147, and His-153 together coordinate Zn(2+).

It belongs to the endoribonuclease YbeY family. It depends on Zn(2+) as a cofactor.

The protein resides in the cytoplasm. Single strand-specific metallo-endoribonuclease involved in late-stage 70S ribosome quality control and in maturation of the 3' terminus of the 16S rRNA. This Rickettsia bellii (strain RML369-C) protein is Endoribonuclease YbeY.